Here is a 167-residue protein sequence, read N- to C-terminus: Phosphopantetheine adenylyltransferase (167 aa).

Residue serine 10 coordinates substrate. ATP-binding positions include 10 to 11 (SF) and histidine 18. The substrate site is built by lysine 42, alanine 79, and arginine 93. ATP-binding positions include 94-96 (GLR), glutamate 104, and 129-135 (VGHITAT).

Belongs to the bacterial CoaD family. Homohexamer. Requires Mg(2+) as cofactor.

It localises to the cytoplasm. It carries out the reaction (R)-4'-phosphopantetheine + ATP + H(+) = 3'-dephospho-CoA + diphosphate. It functions in the pathway cofactor biosynthesis; coenzyme A biosynthesis; CoA from (R)-pantothenate: step 4/5. Reversibly transfers an adenylyl group from ATP to 4'-phosphopantetheine, yielding dephospho-CoA (dPCoA) and pyrophosphate. This Methylocella silvestris (strain DSM 15510 / CIP 108128 / LMG 27833 / NCIMB 13906 / BL2) protein is Phosphopantetheine adenylyltransferase.